Consider the following 522-residue polypeptide: 4-chlorobenzoate--CoA ligase (522 aa).

Residues 161–169, 300–305, and Asn410 contribute to the ATP site; these read TSGTTGLPK and DIYGTT.

Belongs to the ATP-dependent AMP-binding enzyme family. Homodimer. Mg(2+) serves as cofactor.

The enzyme catalyses 4-chlorobenzoate + ATP + CoA = 4-chlorobenzoyl-CoA + AMP + diphosphate. It participates in xenobiotic degradation; 4-chlorobenzoate degradation; 4-hydroxybenzoate from 4-chlorobenzoate: step 2/3. Its function is as follows. Catalyzes the formation of chlorobenzoyl-CoA via a 2 step reaction. First 4-chlorobenzoate is adenylated by ATP, followed by acyl transfer from the 4-chlorobenzoyl-AMP intermediate to CoA. Benzoate, 4-bromobenzoate, 4-iodobenzoate and 4-fluorobenzoate also act as substrates. Inactive towards 4-nitrobenzoate. The sequence is that of 4-chlorobenzoate--CoA ligase from Arthrobacter sp.